Here is a 1270-residue protein sequence, read N- to C-terminus: Myosin-1 (1270 aa).

The tract at residues 1–40 (MGHSRRPAGGEKKSRGFGRSKAAADVGDGRQAGKPQVKKA) is disordered. The Myosin motor domain maps to 50 to 729 (IGVSDLTLLS…TLFALETMRD (680 aa)). 143–150 (GESGAGKT) contributes to the ATP binding site. Position 371 is a phosphoserine (serine 371). The actin-binding stretch occupies residues 418–500 (SIGILDIYGF…PGVFAALNDA (83 aa)). IQ domains are found at residues 733–753 (HNMA…RIEC) and 754–779 (AIRI…QGHQ). One can recognise a TH1 domain in the interval 787-980 (RRRMSLLGSR…TIHTSAGEPP (194 aa)). 2 disordered regions span residues 960 to 1102 (GASN…VLYD) and 1144 to 1270 (PEAY…DDEW). Positions 963–974 (NVDSYKSSTIHT) are enriched in polar residues. The span at 1023–1058 (ARQPMPQPTPQPAAVQPPPAPRPAVSPAAQPRPVPQ) shows a compositional bias: pro residues. Positions 1059–1078 (PVAAVAAAQHTRNASSSSTR) are enriched in low complexity. Pro residues predominate over residues 1079-1088 (APPPPPPATP). Residues 1092 to 1153 (QRKPMAKVLY…PEAYLEEQVA (62 aa)) form the SH3 domain. A compositionally biased stretch (pro residues) spans 1157-1167 (KPAPPPPPPAA). Low complexity-rich tracts occupy residues 1168–1186 (PRAS…VAAK) and 1238–1252 (NSAS…LAEA).

This sequence belongs to the TRAFAC class myosin-kinesin ATPase superfamily. Myosin family. Post-translationally, phosphorylation of the TEDS site (Ser-371) is required for the polarization of the actin cytoskeleton. Phosphorylation probably activates the myosin-I ATPase activity.

It is found in the cytoplasm. Its subcellular location is the cytoskeleton. The protein localises to the actin patch. In terms of biological role, type-I myosin implicated in the organization of the actin cytoskeleton. Required for proper actin cytoskeleton polarization. At the cell cortex, assembles in patch-like structures together with proteins from the actin-polymerizing machinery and promotes actin assembly. Functions as actin nucleation-promoting factor (NPF) for the Arp2/3 complex. Plays an important role in polarized growth, spore germination, hyphal morphogenesis, and septal wall formation. The protein is Myosin-1 (myoA) of Aspergillus niger (strain ATCC MYA-4892 / CBS 513.88 / FGSC A1513).